We begin with the raw amino-acid sequence, 283 residues long: Glutamate racemase (283 aa).

Substrate contacts are provided by residues 28–29 and 60–61; these read DS and YG. C92 serves as the catalytic Proton donor/acceptor. Residue 93-94 participates in substrate binding; it reads NT. C204 functions as the Proton donor/acceptor in the catalytic mechanism. 205–206 contributes to the substrate binding site; it reads TH.

This sequence belongs to the aspartate/glutamate racemases family.

The enzyme catalyses L-glutamate = D-glutamate. It functions in the pathway cell wall biogenesis; peptidoglycan biosynthesis. Provides the (R)-glutamate required for cell wall biosynthesis. The sequence is that of Glutamate racemase from Klebsiella pneumoniae (strain 342).